A 190-amino-acid chain; its full sequence is Peptidyl-tRNA hydrolase (190 aa).

Tyrosine 14 contributes to the tRNA binding site. The active-site Proton acceptor is histidine 19. 3 residues coordinate tRNA: tyrosine 64, asparagine 66, and asparagine 112.

The protein belongs to the PTH family. Monomer.

Its subcellular location is the cytoplasm. The catalysed reaction is an N-acyl-L-alpha-aminoacyl-tRNA + H2O = an N-acyl-L-amino acid + a tRNA + H(+). In terms of biological role, hydrolyzes ribosome-free peptidyl-tRNAs (with 1 or more amino acids incorporated), which drop off the ribosome during protein synthesis, or as a result of ribosome stalling. Catalyzes the release of premature peptidyl moieties from peptidyl-tRNA molecules trapped in stalled 50S ribosomal subunits, and thus maintains levels of free tRNAs and 50S ribosomes. This Chlorobium chlorochromatii (strain CaD3) protein is Peptidyl-tRNA hydrolase.